The primary structure comprises 153 residues: Peptide methionine sulfoxide reductase B6 (153 aa).

The region spanning 28–149 (NEEWRTVLSP…NSVALKFSSA (122 aa)) is the MsrB domain. Zn(2+) contacts are provided by Cys67, Cys70, Cys113, and Cys116. A disulfide bridge connects residues Cys85 and Cys138. The Nucleophile role is filled by Cys138.

It belongs to the MsrB Met sulfoxide reductase family. Zn(2+) serves as cofactor.

The protein resides in the cytoplasm. It localises to the cytosol. It catalyses the reaction L-methionyl-[protein] + [thioredoxin]-disulfide + H2O = L-methionyl-(R)-S-oxide-[protein] + [thioredoxin]-dithiol. Its function is as follows. Catalyzes the reduction of methionine sulfoxide (MetSO) to methionine in proteins. Plays a protective role against oxidative stress by restoring activity to proteins that have been inactivated by methionine oxidation. MSRB family specifically reduces the MetSO R-enantiomer. This chain is Peptide methionine sulfoxide reductase B6 (MSRB6), found in Arabidopsis thaliana (Mouse-ear cress).